The following is a 413-amino-acid chain: Chloramphenicol efflux pump Rv0191 (413 aa).

A run of 12 helical transmembrane segments spans residues 23–43, 55–75, 89–109, 110–130, 150–170, 176–196, 226–246, 256–276, 286–306, 312–332, 353–373, and 378–398; these read LSVLACAAFIYVTAEILPVGA, VVLVGTLLSWYALVAAVTTVP, LVVSLVCLTVSQLVSALAPNF, AVLAAGRVLCAVTHGLLWAVI, IYIGTSLALVVGSPLTAAMSL, LAAVCVTGAAAAVALAARLAL, VLTMIAVTGHFVSYTYIVVII, NLAWLLAAYGVAGLVSVPLVA, AVIVGMTGLTAAFTLLTALAF, AATALLGTGAIVLWGALATAV, GLYVTAFQIGIMAGALLGGLL, and LAMMLTASAGLMGVALFGMTV.

This sequence belongs to the major facilitator superfamily.

The protein localises to the cell membrane. Its activity is regulated as follows. Inhibited by the drug efflux pump inhibitors verapamil, resperine, piperine, chlorpromazine and carbonyl cyanide m-chlorophenylhydrazone (CCCP). Its function is as follows. Active efflux pump that plays an important role in chloramphenicol resistance. Overexpression causes pyrazinamide resistance. This chain is Chloramphenicol efflux pump Rv0191, found in Mycobacterium tuberculosis (strain ATCC 25618 / H37Rv).